Consider the following 434-residue polypeptide: MEKIIVRGGKRLNGTVRVEGAKNAVLPIIAAALLASDGKNVLSEVPVLSDVYTINEVLRHLNAEVVFENNQVTIDASKELNIEAPFEYVRKMRASVQVMGPLLARNGRARIALPGGCAIGSRPIDQHLKGFEAMGAKVQVGNGFVEAYVEGELKGAKIYLDFPSVGATENIMSAATLAKGTTILENAAKEPEIVDLANFLNAMGAKVRGAGTGTIRIEGVDKLYGANHSIIPDRIEAGTFMVAAAITGGDILIENAVPEHLRSITAKMEEMGVKIIEENEGVRVIGPDKLKAVDIKTMPHPGFPTDMQSQMMALLLQADGTSMITETVFENRFMHVEEFRRMNADIKIEGRSVIMNGPNSLQGAEVGATDLRAAAALILAGLVSEGYTRVTELKHLDRGYVDFHKKLAALGATIERVNEKVEEVKEQEVSDLHA.

Residue Lys22–Asn23 participates in phosphoenolpyruvate binding. Residue Arg93 coordinates UDP-N-acetyl-alpha-D-glucosamine. Cys117 serves as the catalytic Proton donor. Cys117 is modified (2-(S-cysteinyl)pyruvic acid O-phosphothioketal). UDP-N-acetyl-alpha-D-glucosamine contacts are provided by residues Arg122 to Gln126, Asp306, and Val328.

This sequence belongs to the EPSP synthase family. MurA subfamily.

It is found in the cytoplasm. It carries out the reaction phosphoenolpyruvate + UDP-N-acetyl-alpha-D-glucosamine = UDP-N-acetyl-3-O-(1-carboxyvinyl)-alpha-D-glucosamine + phosphate. It functions in the pathway cell wall biogenesis; peptidoglycan biosynthesis. Cell wall formation. Adds enolpyruvyl to UDP-N-acetylglucosamine. The sequence is that of UDP-N-acetylglucosamine 1-carboxyvinyltransferase 1 from Bacillus anthracis.